Reading from the N-terminus, the 1688-residue chain is MDAMGSAAEEGTQKKKRRPLVPPPPRPPRALFCLGLQNPFRKFCINIVEWKPFEMIILLTIFANCVALAIFLPMPEDDTNSTNSVLEKVEYIFLFIFTIESFLKIVAYGFILHTDAYLRNGWNILDFTIVSVGVFSVLLEQISKLQGLPAPGKSSGFNVKALRAFRVLRPLRLVSGVPSLQVVLNSIIKAMIPLLHIALLVLFMIIIYAIVGLELFSGKMHKTCYFKDTDITATVDNEKPAPCSSTGQGRQCSINGSECRGWWPGPNNGITHFDNFGFAMLTVYQCITMEGWTEVLYWVNDAIGNEWPWIYFVSLILLGSFFVLNLVLGVLSGEFTKEREKAKSRGAFQMLREQQAMDEDLRGYLDWITHAEVMDPDMEPRDGFSQLEEGGSETDSLYEIEGINKFIAFFRQWRLWHRLLRRKSRDLVKSRFFYWLVIIIILLNTVIIATEHHHQPDSLTKAQDIANEVLLALFTMEMIVKIYALGFQSYFMSLFNRFDSFVVCTGLLEVMLVASDIMSPLGISVLRCIRLLRIFKITRYWTSLNNLVASLLNSVRSIASLLLLLFLFMIIFALLGMQMFGGKFDFEDLEVRRSTFDTFPQALITVFQILTGEDWTAVMYNGIMAYGGPTYSGMSVCIYFIILFVCGNYILLNVFLAIAVDNLAEAENLTSAQKAKAEERKRKKLARANPDKTEEEKLLLAKKEQKAKGEGIPTTARLKIDEFESNVNEIKDPYPSADFPGDDEEEEPEIPISPRPRPLAELQLKEKAVPMPEASSFFIFSPTNKIRVLCHRIINATTFTNFILLFILLSSISLAAEDPIQPESFRNKVLSKLDIVFTVIFTTEIVLKMTAYGAFLHKGSFCRNSFNILDLSVVGVSLISMGIESSAISVVKILRVLRVLRPLRAINRAKGLKHVVQCLFVAIKTIGNIVLVTTLLQFMFSCIGVQLFKGKFYSCTDTTKITADECRGYFFVAKDGNPAHMEAVPRVWSHSDFHFDNVLSGMMSLFTISTFEGWPQLLYRAIDSHAEDMGPIYNYRIEIAVFFIVYIILIAFFMMNIFVGFVIVTFQEQGEQEYKDCELDKNQRQCVQYALKARPLRRYIPKNPHQYKIWYVVTSSYFEYLMFFLITLNTISLGMQHYGQTAEFSYMSDILNVAFTGIFTVEMFLKLAAFKAKGYFGDPWNVFDFLIVIGSVIDVILSEIDTPGIPATPGAEESSRISITFFRLFRVLRLVKLLSRGEGVRTLLWTFIKSFQALPYVALLIVMLFFIYAVIGMQVFGKIALVDGTHINRNSNFQTFPQAVLLLFRCATGEAWQEILLACSYGKLCDPMSDFQPGEEYTCGTSFAYFYFISFYMLCAFLIINLFVAVIMDNFDYLTRDWSILGPHHLDEFKRIWAEYDPEAKGRIKHLDVVTLLRRIQPPLGFGKFCPHRVACKRLVSMNMPLNSDGTVTFNATLFSLVRTALKIKTEGNFEQSNEELRMIIKKIWKRTSMKLLDQVIPPIGDDEVTVGKFYAIFLIQEHFRKFKKRQEEYYGYRPKKNANNVEIQAGLRTIEEEEGEGELQRAISGDLTPEEELERAMVEAAIEEGIYRRTGGLFGQEDSFHTGPVSPLHTITSQRPLRFSEAGSEDLDSPVFLPEPVFFPPPRRNRNTNNSTISRGLDQRLTTPDFERVQQSEEQWDTNSSISQATN.

The tract at residues 1-24 is disordered; it reads MDAMGSAAEEGTQKKKRRPLVPPP. Residues 1–51 are Cytoplasmic-facing; it reads MDAMGSAAEEGTQKKKRRPLVPPPPRPPRALFCLGLQNPFRKFCINIVEWK. The stretch at 38-335 is one I repeat; that stretch reads NPFRKFCINI…LVLGVLSGEF (298 aa). Residues 52–70 traverse the membrane as a helical segment; the sequence is PFEMIILLTIFANCVALAI. Residues 71–88 lie on the Extracellular side of the membrane; that stretch reads FLPMPEDDTNSTNSVLEK. Asn-80 is a glycosylation site (N-linked (GlcNAc...) asparagine). The chain crosses the membrane as a helical span at residues 89–108; that stretch reads VEYIFLFIFTIESFLKIVAY. The Cytoplasmic segment spans residues 109–120; the sequence is GFILHTDAYLRN. Residues 121 to 139 form a helical membrane-spanning segment; the sequence is GWNILDFTIVSVGVFSVLL. The Extracellular portion of the chain corresponds to 140-158; that stretch reads EQISKLQGLPAPGKSSGFN. Residues 159–177 traverse the membrane as a helical segment; the sequence is VKALRAFRVLRPLRLVSGV. At 178–196 the chain is on the cytoplasmic side; sequence PSLQVVLNSIIKAMIPLLH. A helical transmembrane segment spans residues 197–216; sequence IALLVLFMIIIYAIVGLELF. Residues 217–307 lie on the Extracellular side of the membrane; that stretch reads SGKMHKTCYF…WVNDAIGNEW (91 aa). Asn-255 carries an N-linked (GlcNAc...) asparagine glycan. Glu-290 is a Ca(2+) binding site. A helical transmembrane segment spans residues 308–332; that stretch reads PWIYFVSLILLGSFFVLNLVLGVLS. The Cytoplasmic segment spans residues 333 to 431; it reads GEFTKEREKA…RKSRDLVKSR (99 aa). Positions 355-372 are binding to the beta subunit; it reads QAMDEDLRGYLDWITHAE. An II repeat occupies 417 to 663; that stretch reads HRLLRRKSRD…VFLAIAVDNL (247 aa). The helical transmembrane segment at 432-450 threads the bilayer; sequence FFYWLVIIIILLNTVIIAT. Residues 451-465 lie on the Extracellular side of the membrane; that stretch reads EHHHQPDSLTKAQDI. Residues 466 to 485 form a helical membrane-spanning segment; it reads ANEVLLALFTMEMIVKIYAL. At 486–493 the chain is on the cytoplasmic side; it reads GFQSYFMS. Residues 494-512 form a helical membrane-spanning segment; the sequence is LFNRFDSFVVCTGLLEVML. Residues 513–522 lie on the Extracellular side of the membrane; it reads VASDIMSPLG. The helical transmembrane segment at 523–541 threads the bilayer; that stretch reads ISVLRCIRLLRIFKITRYW. The Cytoplasmic segment spans residues 542-560; that stretch reads TSLNNLVASLLNSVRSIAS. Residues 561–580 traverse the membrane as a helical segment; the sequence is LLLLLFLFMIIFALLGMQMF. Over 581 to 635 the chain is Extracellular; that stretch reads GGKFDFEDLEVRRSTFDTFPQALITVFQILTGEDWTAVMYNGIMAYGGPTYSGMS. Glu-613 contacts Ca(2+). A helical membrane pass occupies residues 636 to 660; sequence VCIYFIILFVCGNYILLNVFLAIAV. The Cytoplasmic portion of the chain corresponds to 661–797; the sequence is DNLAEAENLT…VLCHRIINAT (137 aa). Disordered stretches follow at residues 672–696 and 729–755; these read AQKA…TEEE and EIKD…ISPR. Acidic residues predominate over residues 740–749; that stretch reads PGDDEEEEPE. The III repeat unit spans residues 784–1066; that stretch reads NKIRVLCHRI…IFVGFVIVTF (283 aa). Residues 798–816 form a helical membrane-spanning segment; sequence TFTNFILLFILLSSISLAA. Residues 817-832 lie on the Extracellular side of the membrane; the sequence is EDPIQPESFRNKVLSK. The helical transmembrane segment at 833–852 threads the bilayer; the sequence is LDIVFTVIFTTEIVLKMTAY. Over 853–864 the chain is Cytoplasmic; that stretch reads GAFLHKGSFCRN. Residues 865-883 form a helical membrane-spanning segment; sequence SFNILDLSVVGVSLISMGI. Residues 884-890 lie on the Extracellular side of the membrane; it reads ESSAISV. The helical transmembrane segment at 891 to 909 threads the bilayer; it reads VKILRVLRVLRPLRAINRA. Topologically, residues 910–928 are cytoplasmic; that stretch reads KGLKHVVQCLFVAIKTIGN. Residues 929–948 form a helical membrane-spanning segment; that stretch reads IVLVTTLLQFMFSCIGVQLF. At 949–1038 the chain is on the extracellular side; that stretch reads KGKFYSCTDT…MGPIYNYRIE (90 aa). Positions 986–1075 are dihydropyridine binding; that stretch reads RVWSHSDFHF…FQEQGEQEYK (90 aa). A Ca(2+)-binding site is contributed by Glu-1012. Residues 1039 to 1063 form a helical membrane-spanning segment; it reads IAVFFIVYIILIAFFMMNIFVGFVI. Topologically, residues 1064–1116 are cytoplasmic; that stretch reads VTFQEQGEQEYKDCELDKNQRQCVQYALKARPLRRYIPKNPHQYKIWYVVTSS. One copy of the IV repeat lies at 1103 to 1371; sequence NPHQYKIWYV…LFVAVIMDNF (269 aa). The helical transmembrane segment at 1117 to 1135 threads the bilayer; that stretch reads YFEYLMFFLITLNTISLGM. The Extracellular segment spans residues 1136–1150; sequence QHYGQTAEFSYMSDI. A helical membrane pass occupies residues 1151 to 1170; that stretch reads LNVAFTGIFTVEMFLKLAAF. Over 1171–1178 the chain is Cytoplasmic; that stretch reads KAKGYFGD. A helical transmembrane segment spans residues 1179–1197; sequence PWNVFDFLIVIGSVIDVIL. Residues 1198–1218 are Extracellular-facing; that stretch reads SEIDTPGIPATPGAEESSRIS. The helical transmembrane segment at 1219 to 1237 threads the bilayer; it reads ITFFRLFRVLRLVKLLSRG. Residues 1238–1256 are Cytoplasmic-facing; that stretch reads EGVRTLLWTFIKSFQALPY. Residues 1257 to 1276 form a helical membrane-spanning segment; the sequence is VALLIVMLFFIYAVIGMQVF. Residues 1277–1343 lie on the Extracellular side of the membrane; sequence GKIALVDGTH…GEEYTCGTSF (67 aa). Residues 1324–1390 form a dihydropyridine binding region; sequence LCDPMSDFQP…LGPHHLDEFK (67 aa). Residues 1336-1379 form a phenylalkylamine binding region; the sequence is EYTCGTSFAYFYFISFYMLCAFLIINLFVAVIMDNFDYLTRDWS. A helical membrane pass occupies residues 1344 to 1368; sequence AYFYFISFYMLCAFLIINLFVAVIM. The Cytoplasmic portion of the chain corresponds to 1369–1688; the sequence is DNFDYLTRDW…TNSSISQATN (320 aa). Disordered regions lie at residues 1635 to 1664 and 1669 to 1688; these read PEPV…RLTT and RVQQ…QATN. The segment covering 1678 to 1688 has biased composition (polar residues); it reads DTNSSISQATN.

It belongs to the calcium channel alpha-1 subunit (TC 1.A.1.11) family. As to quaternary structure, multisubunit complex consisting of alpha-1, alpha-2, beta and delta subunits in a 1:1:1:1 ratio. The channel activity is directed by the pore-forming and voltage-sensitive alpha-1 subunit. In many cases, this subunit is sufficient to generate voltage-sensitive calcium channel activity. The auxiliary subunits beta and alpha-2/delta linked by a disulfide bridge regulate the channel activity. An additional gamma subunit is present only in skeletal muscle L-type channel. Post-translationally, phosphorylation by PKA stimulates the calcium channel function. As to expression, skeletal muscle specific.

The protein resides in the membrane. In terms of biological role, voltage-sensitive calcium channels (VSCC) mediate the entry of calcium ions into excitable cells and are also involved in a variety of calcium-dependent processes, including muscle contraction, gene expression, cell motility, cell division and cell death. The isoform alpha-1S gives rise to L-type calcium currents. Long-lasting (L-type) calcium channels belong to the 'high-voltage activated' (HVA) group. They are blocked by dihydropyridines (DHP), phenylalkylamines, and by benzothiazepines. Calcium channels containing the alpha-1S subunit play an important role in excitation-contraction coupling in skele|tal muscle. The chain is Voltage-dependent L-type calcium channel subunit alpha-1S from Aquarana catesbeiana (American bullfrog).